The chain runs to 1583 residues: Methyl-CpG-binding domain protein 5/6 homolog sba (1583 aa).

The segment at 81–115 (AVHQQQQQHHHQQQQQQQHQQQQQILPAGLVNGNG) is disordered. Residues 83–104 (HQQQQQHHHQQQQQQQHQQQQQ) show a composition bias toward low complexity. Residues 238 to 308 (RKTATSYNGN…YLFDFNAQVP (71 aa)) enclose the MBD domain. Disordered regions lie at residues 427-457 (NKLP…PTSQ), 556-579 (EPIV…QQQL), 630-694 (VTLV…QTQV), 839-862 (AELH…AASS), 940-980 (PPAQ…ISPQ), 1179-1247 (VMSR…RSIC), and 1287-1339 (QESP…SFPL). A compositionally biased stretch (low complexity) spans 430-439 (PATNRTATTP). Over residues 440-449 (TPAPTPPPQH) the composition is skewed to pro residues. The span at 563-579 (QQQQQQQQQQLQQQQQL) shows a compositional bias: low complexity. The segment covering 658–677 (AISTSHESPRQSLSSPTDSV) has biased composition (polar residues). Low complexity-rich tracts occupy residues 679-693 (SAKS…PQTQ) and 851-862 (VSQPSPVAAASS). Polar residues-rich tracts occupy residues 1179–1195 (VMSR…TTTC), 1216–1240 (CVSS…PSST), and 1287–1313 (QESP…TVRT). Low complexity predominate over residues 1323–1333 (RGAARAAPSAS). One can recognise a PWWP domain in the interval 1346 to 1408 (IGELIWGPAR…VNSLQSLSEG (63 aa)). Positions 1415–1446 (AQKDTRKSRKLNSQLERAIQEAMTELDNISAS) form a coiled coil. The tract at residues 1471–1497 (IGGQQQYQQQQQQQQQQQSPSSTNNKI) is disordered. A compositionally biased stretch (low complexity) spans 1474–1488 (QQQYQQQQQQQQQQQ).

As to quaternary structure, component of the polycomb repressive deubiquitinase (PR-DUB) complex, at least composed of caly/calypso, Asx and sba (MDB5/6 homolog). Interacts (via MBD domain) with Asx (via PHD domain); the interaction is important for the stability of the PR-DUB complex.

Its function is as follows. Non-catalytic component of the polycomb repressive deubiquitinase (PR-DUB) complex, a complex that specifically mediates deubiquitination of histone H2A monoubiquitinated at 'Lys-119' (H2AK118ub1). Important for maintaining stability of the PR-DUB complex. Probable epigenetic regulator involved in developmental pattern formation and eye development. This chain is Methyl-CpG-binding domain protein 5/6 homolog sba, found in Drosophila melanogaster (Fruit fly).